Reading from the N-terminus, the 71-residue chain is Beta-defensin 7 (71 aa).

A signal peptide spans 1–22 (MRIHYVLFAFLLVLLSPFAAFS). The residue at position 23 (glutamine 23) is a Pyrrolidone carboxylic acid. A propeptide spanning residues 23-25 (QDI) is cleaved from the precursor. 3 cysteine pairs are disulfide-bonded: cysteine 31/cysteine 58, cysteine 38/cysteine 52, and cysteine 42/cysteine 59.

The protein belongs to the beta-defensin family. LAP/TAP subfamily.

The protein localises to the secreted. In terms of biological role, has bactericidal activity. The chain is Beta-defensin 7 (Defb7) from Mus musculus (Mouse).